Here is a 428-residue protein sequence, read N- to C-terminus: Glutamate-1-semialdehyde 2,1-aminomutase (428 aa).

Lys-265 carries the N6-(pyridoxal phosphate)lysine modification.

The protein belongs to the class-III pyridoxal-phosphate-dependent aminotransferase family. HemL subfamily. In terms of assembly, homodimer. Requires pyridoxal 5'-phosphate as cofactor.

The protein localises to the cytoplasm. It catalyses the reaction (S)-4-amino-5-oxopentanoate = 5-aminolevulinate. It participates in porphyrin-containing compound metabolism; protoporphyrin-IX biosynthesis; 5-aminolevulinate from L-glutamyl-tRNA(Glu): step 2/2. This chain is Glutamate-1-semialdehyde 2,1-aminomutase, found in Vesicomyosocius okutanii subsp. Calyptogena okutanii (strain HA).